The chain runs to 606 residues: Electron transfer flavoprotein-ubiquinone oxidoreductase, mitochondrial (606 aa).

59-73 (VVIVGAGPSGLSTAI) contributes to the FAD binding site. A helical membrane pass occupies residues 448-468 (PSLHWGTIPGLIYGALEMYIF). Cys551, Cys575, Cys578, and Cys581 together coordinate [4Fe-4S] cluster.

The protein belongs to the ETF-QO/FixC family. In terms of assembly, monomer. The cofactor is [4Fe-4S] cluster. FAD serves as cofactor.

Its subcellular location is the mitochondrion inner membrane. It carries out the reaction a ubiquinone + reduced [electron-transfer flavoprotein] = a ubiquinol + oxidized [electron-transfer flavoprotein] + H(+). Accepts electrons from ETF and reduces ubiquinone. The sequence is that of Electron transfer flavoprotein-ubiquinone oxidoreductase, mitochondrial (etfdh) from Dictyostelium discoideum (Social amoeba).